The sequence spans 251 residues: 1-(5-phosphoribosyl)-5-[(5-phosphoribosylamino)methylideneamino] imidazole-4-carboxamide isomerase (251 aa).

Catalysis depends on aspartate 8, which acts as the Proton acceptor. The active-site Proton donor is the aspartate 131.

The protein belongs to the HisA/HisF family.

The protein localises to the cytoplasm. It carries out the reaction 1-(5-phospho-beta-D-ribosyl)-5-[(5-phospho-beta-D-ribosylamino)methylideneamino]imidazole-4-carboxamide = 5-[(5-phospho-1-deoxy-D-ribulos-1-ylimino)methylamino]-1-(5-phospho-beta-D-ribosyl)imidazole-4-carboxamide. Its pathway is amino-acid biosynthesis; L-histidine biosynthesis; L-histidine from 5-phospho-alpha-D-ribose 1-diphosphate: step 4/9. This is 1-(5-phosphoribosyl)-5-[(5-phosphoribosylamino)methylideneamino] imidazole-4-carboxamide isomerase from Burkholderia vietnamiensis (strain G4 / LMG 22486) (Burkholderia cepacia (strain R1808)).